Consider the following 73-residue polypeptide: Maltose-binding periplasmic protein (73 aa).

Positions 1–30 (MMTKTNLKMGARTLALSVLATLVLSASALA) are cleaved as a signal peptide.

This sequence belongs to the bacterial solute-binding protein 1 family.

The protein resides in the periplasm. Its function is as follows. Involved in the high-affinity maltose membrane transport system. Initial receptor for the active transport of and chemotaxis toward maltooligosaccharides. In Photorhabdus luminescens (Xenorhabdus luminescens), this protein is Maltose-binding periplasmic protein (malE).